The following is a 236-amino-acid chain: 7-cyano-7-deazaguanine synthase (236 aa).

Cys7 to Ala17 serves as a coordination point for ATP. The Zn(2+) site is built by Cys185, Cys193, Cys196, and Cys199.

The protein belongs to the QueC family. Requires Zn(2+) as cofactor.

It carries out the reaction 7-carboxy-7-deazaguanine + NH4(+) + ATP = 7-cyano-7-deazaguanine + ADP + phosphate + H2O + H(+). Its pathway is purine metabolism; 7-cyano-7-deazaguanine biosynthesis. Functionally, catalyzes the ATP-dependent conversion of 7-carboxy-7-deazaguanine (CDG) to 7-cyano-7-deazaguanine (preQ(0)). The sequence is that of 7-cyano-7-deazaguanine synthase from Agrobacterium fabrum (strain C58 / ATCC 33970) (Agrobacterium tumefaciens (strain C58)).